The chain runs to 117 residues: Large ribosomal subunit protein bL20 (117 aa).

It belongs to the bacterial ribosomal protein bL20 family.

Binds directly to 23S ribosomal RNA and is necessary for the in vitro assembly process of the 50S ribosomal subunit. It is not involved in the protein synthesizing functions of that subunit. The chain is Large ribosomal subunit protein bL20 from Acetivibrio thermocellus (strain ATCC 27405 / DSM 1237 / JCM 9322 / NBRC 103400 / NCIMB 10682 / NRRL B-4536 / VPI 7372) (Clostridium thermocellum).